The sequence spans 392 residues: Putative non-inhibitory serpin-10 (392 aa).

The segment at 333–357 is RCL; it reads GTTAVEATYSCCSPTYSGPESPKPR.

The protein belongs to the serpin family.

The polypeptide is Putative non-inhibitory serpin-10 (Oryza sativa subsp. japonica (Rice)).